Here is a 430-residue protein sequence, read N- to C-terminus: Adenylosuccinate synthetase (430 aa).

GTP-binding positions include 13–19 (GDEGKGK) and 41–43 (GHT). The Proton acceptor role is filled by Asp-14. Asp-14 and Gly-41 together coordinate Mg(2+). IMP contacts are provided by residues 14–17 (DEGK), 39–42 (NAGH), Thr-130, Arg-144, Gln-225, Thr-240, and Arg-304. His-42 serves as the catalytic Proton donor. 300–306 (STTGRAR) lines the substrate pocket. GTP is bound by residues Arg-306, 332–334 (KLD), and 414–416 (STG).

Belongs to the adenylosuccinate synthetase family. As to quaternary structure, homodimer. Requires Mg(2+) as cofactor.

Its subcellular location is the cytoplasm. It carries out the reaction IMP + L-aspartate + GTP = N(6)-(1,2-dicarboxyethyl)-AMP + GDP + phosphate + 2 H(+). The protein operates within purine metabolism; AMP biosynthesis via de novo pathway; AMP from IMP: step 1/2. Its function is as follows. Plays an important role in the de novo pathway of purine nucleotide biosynthesis. Catalyzes the first committed step in the biosynthesis of AMP from IMP. The sequence is that of Adenylosuccinate synthetase from Azotobacter vinelandii (strain DJ / ATCC BAA-1303).